The following is a 55-amino-acid chain: UPF0434 protein BPEN_388 (55 aa).

It belongs to the UPF0434 family.

This is UPF0434 protein BPEN_388 from Blochmanniella pennsylvanica (strain BPEN).